A 317-amino-acid chain; its full sequence is Glutaminase (317 aa).

The substrate site is built by S67, N118, E162, N169, Y193, Y245, and V263.

Belongs to the glutaminase family. Homotetramer.

The enzyme catalyses L-glutamine + H2O = L-glutamate + NH4(+). This Brucella abortus (strain S19) protein is Glutaminase.